A 183-amino-acid polypeptide reads, in one-letter code: Cell division protein ZapC (183 aa).

The protein belongs to the ZapC family. As to quaternary structure, interacts directly with FtsZ.

It is found in the cytoplasm. Functionally, contributes to the efficiency of the cell division process by stabilizing the polymeric form of the cell division protein FtsZ. Acts by promoting interactions between FtsZ protofilaments and suppressing the GTPase activity of FtsZ. The chain is Cell division protein ZapC from Xenorhabdus bovienii (strain SS-2004) (Xenorhabdus nematophila subsp. bovienii).